Here is a 210-residue protein sequence, read N- to C-terminus: Kinetochore protein Spc25 (210 aa).

Positions 42 to 106 form a coiled coil; sequence TMENIKRQQH…KKKQERDKLI (65 aa).

This sequence belongs to the SPC25 family. Component of the Ndc80 complex, which is composed of Ndc80, Nuf2 and Spc25.

It is found in the nucleus. It localises to the chromosome. The protein resides in the centromere. Its subcellular location is the kinetochore. Its function is as follows. Acts as a component of the essential kinetochore-associated Ndc80 complex, which is required for chromosome segregation and spindle checkpoint activity during meiosis and mitosis. Required for kinetochore integrity and the organization of stable microtubule binding sites in the outer plate of the kinetochore. Participates in SAC signaling that responds specifically to disruptions in spindle microtubule dynamics. The NDC80 complex synergistically enhances the affinity of the SKA1 complex for microtubules and may allow the NDC80 complex to track depolymerizing microtubules. This chain is Kinetochore protein Spc25, found in Drosophila virilis (Fruit fly).